The sequence spans 67 residues: Conotoxin reg3.8 (67 aa).

A signal peptide spans 1 to 22 (MMSKLGVLLTICLLLFPLSVLP). A propeptide spanning residues 23–50 (LDGDQLADQPARHAQSAERNARFHPVKR) is cleaved from the precursor. Intrachain disulfides connect C51-C65, C52-C63, and C57-C66. C66 carries the post-translational modification Cysteine amide.

It belongs to the conotoxin M superfamily. In terms of tissue distribution, expressed by the venom duct.

The protein localises to the secreted. The polypeptide is Conotoxin reg3.8 (Conus regius (Crown cone)).